Here is a 118-residue protein sequence, read N- to C-terminus: Large ribosomal subunit protein bL19 (118 aa).

The protein belongs to the bacterial ribosomal protein bL19 family.

This protein is located at the 30S-50S ribosomal subunit interface and may play a role in the structure and function of the aminoacyl-tRNA binding site. The sequence is that of Large ribosomal subunit protein bL19 from Helicobacter pylori (strain G27).